The following is a 286-amino-acid chain: Phosphatidylserine decarboxylase proenzyme (286 aa).

Residues D90, H147, and S252 each act as charge relay system; for autoendoproteolytic cleavage activity in the active site. S252 functions as the Schiff-base intermediate with substrate; via pyruvic acid; for decarboxylase activity in the catalytic mechanism. The residue at position 252 (S252) is a Pyruvic acid (Ser); by autocatalysis.

This sequence belongs to the phosphatidylserine decarboxylase family. PSD-B subfamily. Prokaryotic type I sub-subfamily. As to quaternary structure, heterodimer of a large membrane-associated beta subunit and a small pyruvoyl-containing alpha subunit. It depends on pyruvate as a cofactor. Is synthesized initially as an inactive proenzyme. Formation of the active enzyme involves a self-maturation process in which the active site pyruvoyl group is generated from an internal serine residue via an autocatalytic post-translational modification. Two non-identical subunits are generated from the proenzyme in this reaction, and the pyruvate is formed at the N-terminus of the alpha chain, which is derived from the carboxyl end of the proenzyme. The autoendoproteolytic cleavage occurs by a canonical serine protease mechanism, in which the side chain hydroxyl group of the serine supplies its oxygen atom to form the C-terminus of the beta chain, while the remainder of the serine residue undergoes an oxidative deamination to produce ammonia and the pyruvoyl prosthetic group on the alpha chain. During this reaction, the Ser that is part of the protease active site of the proenzyme becomes the pyruvoyl prosthetic group, which constitutes an essential element of the active site of the mature decarboxylase.

Its subcellular location is the cell membrane. It carries out the reaction a 1,2-diacyl-sn-glycero-3-phospho-L-serine + H(+) = a 1,2-diacyl-sn-glycero-3-phosphoethanolamine + CO2. The protein operates within phospholipid metabolism; phosphatidylethanolamine biosynthesis; phosphatidylethanolamine from CDP-diacylglycerol: step 2/2. In terms of biological role, catalyzes the formation of phosphatidylethanolamine (PtdEtn) from phosphatidylserine (PtdSer). This Azotobacter vinelandii (strain DJ / ATCC BAA-1303) protein is Phosphatidylserine decarboxylase proenzyme.